The following is an 85-amino-acid chain: MKVTLIAILTCAAVLVLHTTAAEELEAESQLMKVGMPDTELAAVDEERLFECSVSCEIEKEGNKDCKKKKCKGGWKCKFNMCVKV.

A signal peptide spans 1-22; sequence MKVTLIAILTCAAVLVLHTTAA. Residues 23-48 constitute a propeptide that is removed on maturation; it reads EELEAESQLMKVGMPDTELAAVDEER. 3 cysteine pairs are disulfide-bonded: cysteine 52–cysteine 66, cysteine 56–cysteine 77, and cysteine 71–cysteine 82.

This sequence belongs to the neurotoxin 12 (Hwtx-2) family. 02 (Hwtx-2) subfamily. In terms of assembly, monomer. Expressed by the venom gland.

The protein resides in the secreted. Neurotoxin active on both insects and mammals. The chain is U4-theraphotoxin-Hhn1a from Cyriopagopus hainanus (Chinese bird spider).